Reading from the N-terminus, the 270-residue chain is Formamidopyrimidine-DNA glycosylase (270 aa).

P2 (schiff-base intermediate with DNA) is an active-site residue. The active-site Proton donor is the E3. K58 functions as the Proton donor; for beta-elimination activity in the catalytic mechanism. DNA contacts are provided by H91, R110, and R151. Residues F236–R270 form an FPG-type zinc finger. R260 functions as the Proton donor; for delta-elimination activity in the catalytic mechanism.

The protein belongs to the FPG family. Monomer. Zn(2+) serves as cofactor.

The catalysed reaction is Hydrolysis of DNA containing ring-opened 7-methylguanine residues, releasing 2,6-diamino-4-hydroxy-5-(N-methyl)formamidopyrimidine.. It catalyses the reaction 2'-deoxyribonucleotide-(2'-deoxyribose 5'-phosphate)-2'-deoxyribonucleotide-DNA = a 3'-end 2'-deoxyribonucleotide-(2,3-dehydro-2,3-deoxyribose 5'-phosphate)-DNA + a 5'-end 5'-phospho-2'-deoxyribonucleoside-DNA + H(+). Involved in base excision repair of DNA damaged by oxidation or by mutagenic agents. Acts as a DNA glycosylase that recognizes and removes damaged bases. Has a preference for oxidized purines, such as 7,8-dihydro-8-oxoguanine (8-oxoG). Has AP (apurinic/apyrimidinic) lyase activity and introduces nicks in the DNA strand. Cleaves the DNA backbone by beta-delta elimination to generate a single-strand break at the site of the removed base with both 3'- and 5'-phosphates. The chain is Formamidopyrimidine-DNA glycosylase from Pseudomonas paraeruginosa (strain DSM 24068 / PA7) (Pseudomonas aeruginosa (strain PA7)).